The following is a 477-amino-acid chain: Ribulose bisphosphate carboxylase large chain (477 aa).

The propeptide occupies M1–S2. An N-acetylproline modification is found at P3. At K14 the chain carries N6,N6,N6-trimethyllysine. 2 residues coordinate substrate: N123 and T173. K175 functions as the Proton acceptor in the catalytic mechanism. K177 contacts substrate. Mg(2+)-binding residues include K201, D203, and E204. K201 is modified (N6-carboxylysine). H294 acts as the Proton acceptor in catalysis. The substrate site is built by R295, H327, and S379.

The protein belongs to the RuBisCO large chain family. Type I subfamily. Heterohexadecamer of 8 large chains and 8 small chains; disulfide-linked. The disulfide link is formed within the large subunit homodimers. The cofactor is Mg(2+). The disulfide bond which can form in the large chain dimeric partners within the hexadecamer appears to be associated with oxidative stress and protein turnover.

Its subcellular location is the plastid. The protein localises to the chloroplast. It catalyses the reaction 2 (2R)-3-phosphoglycerate + 2 H(+) = D-ribulose 1,5-bisphosphate + CO2 + H2O. It carries out the reaction D-ribulose 1,5-bisphosphate + O2 = 2-phosphoglycolate + (2R)-3-phosphoglycerate + 2 H(+). Its function is as follows. RuBisCO catalyzes two reactions: the carboxylation of D-ribulose 1,5-bisphosphate, the primary event in carbon dioxide fixation, as well as the oxidative fragmentation of the pentose substrate in the photorespiration process. Both reactions occur simultaneously and in competition at the same active site. The sequence is that of Ribulose bisphosphate carboxylase large chain from Nicotiana sylvestris (Wood tobacco).